The sequence spans 502 residues: Chromatin structure-remodeling complex protein RSC58 (502 aa).

Positions 19–134 constitute a Bromo domain; the sequence is SILNAASVKC…KFSSELLLRE (116 aa). The disordered stretch occupies residues 336–378; that stretch reads NEEGINRKQNDENNKNVDGKSNGVQDDGGDNDNDATIASANSE. The span at 339 to 353 shows a compositional bias: basic and acidic residues; it reads GINRKQNDENNKNVD.

As to quaternary structure, component of the two forms of the RSC complex composed of at least either RSC1 or RSC2, and ARP7, ARP9, LDB7, NPL6, RSC3, RSC30, RSC4, RSC58, RSC6, RSC8, RSC9, SFH1, STH1, HTL1 and probably RTT102. The complexes interact with histone and histone variant components of centromeric chromatin.

It is found in the nucleus. Component of the chromatin structure-remodeling complex (RSC), which is involved in transcription regulation and nucleosome positioning. RSC is responsible for the transfer of a histone octamer from a nucleosome core particle to naked DNA. The reaction requires ATP and involves an activated RSC-nucleosome intermediate. Remodeling reaction also involves DNA translocation, DNA twist and conformational change. As a reconfigurer of centromeric and flanking nucleosomes, RSC complex is required both for proper kinetochore function in chromosome segregation and, via a PKC1-dependent signaling pathway, for organization of the cellular cytoskeleton. This Saccharomyces cerevisiae (strain ATCC 204508 / S288c) (Baker's yeast) protein is Chromatin structure-remodeling complex protein RSC58 (RSC58).